Reading from the N-terminus, the 334-residue chain is MLSSRQYGLSDVLRALEESRKLADADRSTDQGLLGPFYNDLGMGYFQLQLFPLAVEAFLQALPLCRQPSEQATVLQNLGMTHNVLGNYWEAQEFHQKAASLHGSVGQRWEQGRSFSGLAFSLSQLGDHRAAWDSYLHALQAAQDTGDVKGQWQACEGLGAAAARLGQHDQALKYYKEALALCQHEPSSVRERLVAKLADAMRTFVAQEKIAQARFLPSAPGKLQTSRKAKTSARVQSSAEDAQESQWEGEASEGGHEKKEMEGLVNTATVLGPQRQNRATTHLPSGGPSPSGEEYPFIIAPKKLRVSRSSTWAKEALGRNFQRTRIQSGLCSIM.

4 TPR repeats span residues 35–68 (GPFY…CRQP), 72–105 (ATVL…HGSV), 112–145 (GRSF…AQDT), and 152–185 (WQAC…CQHE). Residues 220 to 258 (PGKLQTSRKAKTSARVQSSAEDAQESQWEGEASEGGHEK) form a disordered region. The segment covering 233–246 (ARVQSSAEDAQESQ) has biased composition (polar residues).

The sequence is that of Tetratricopeptide repeat protein 24 (Ttc24) from Mus musculus (Mouse).